The following is a 174-amino-acid chain: MGKITFYEDRGFQGRCYECSSDCPNLQTYFSRCNSIRVDSGCWMLYERPNYQGYQYFLRRGDYPDYQQWMGFSDSIRSCRSIPYTSSHRIRLYERDDYRGLVSELMDDCSCIHDRFRLHEIYSMHVLEGCWVLYEMPNYRGRQYLLRPGDYRRYHDWGAMDAKVGSLRRVMDLY.

2 Beta/gamma crystallin 'Greek key' domains span residues 2 to 40 (GKIT…RVDS) and 41 to 83 (GCWM…RSIP). A connecting peptide region spans residues 84 to 87 (YTSS). Beta/gamma crystallin 'Greek key' domains lie at 88-128 (HRIR…HVLE) and 129-171 (GCWV…RRVM).

This sequence belongs to the beta/gamma-crystallin family.

Functionally, crystallins are the dominant structural components of the vertebrate eye lens. The polypeptide is Gamma-crystallin A (Cryga) (Mus musculus (Mouse)).